We begin with the raw amino-acid sequence, 281 residues long: Pantothenate synthetase (281 aa).

30-37 lines the ATP pocket; it reads MGNLHQGH. The Proton donor role is filled by H37. (R)-pantoate is bound at residue Q61. Q61 serves as a coordination point for beta-alanine. 149 to 152 is an ATP binding site; sequence GNKD. Q155 serves as a coordination point for (R)-pantoate. Residues I178 and 186–189 each bind ATP; that span reads MSSR.

This sequence belongs to the pantothenate synthetase family. Homodimer.

The protein resides in the cytoplasm. It catalyses the reaction (R)-pantoate + beta-alanine + ATP = (R)-pantothenate + AMP + diphosphate + H(+). The protein operates within cofactor biosynthesis; (R)-pantothenate biosynthesis; (R)-pantothenate from (R)-pantoate and beta-alanine: step 1/1. Its function is as follows. Catalyzes the condensation of pantoate with beta-alanine in an ATP-dependent reaction via a pantoyl-adenylate intermediate. In Shewanella sp. (strain MR-7), this protein is Pantothenate synthetase.